Consider the following 492-residue polypeptide: Cytochrome P450 2A12 (492 aa).

Cys-437 is a binding site for heme.

This sequence belongs to the cytochrome P450 family. It depends on heme as a cofactor. Liver.

It is found in the endoplasmic reticulum membrane. The protein localises to the microsome membrane. It carries out the reaction an organic molecule + reduced [NADPH--hemoprotein reductase] + O2 = an alcohol + oxidized [NADPH--hemoprotein reductase] + H2O + H(+). In terms of biological role, highly active in the 7-alpha-hydroxylation of testosterone. The protein is Cytochrome P450 2A12 (Cyp2a12) of Mus musculus (Mouse).